The following is a 206-amino-acid chain: Threonine efflux protein (206 aa).

The chain crosses the membrane as a helical span at residues 1 to 21 (MLMLFLTVAMVHIVALMSPGP). Topologically, residues 22–43 (DFFFVSQTAVSRSRKEAMMGVL) are periplasmic. Residues 44-64 (GITCGVMVWAGIALLGLHLII) traverse the membrane as a helical segment. Topologically, residues 65-66 (EK) are cytoplasmic. The helical transmembrane segment at 67–87 (MAWLHTLIMVGGGLYLCWMGY) threads the bilayer. Residues 88 to 149 (QMLRGALKKE…VGDNVGTTAR (62 aa)) are Periplasmic-facing. The helical transmembrane segment at 150–173 (WGIFALIIVETLAWFTVVASLFAL) threads the bilayer. The Cytoplasmic segment spans residues 174–206 (PQMRRGYQRLAKWIDGFAGALFAGFGIHLIISR).

This sequence belongs to the Rht family.

It localises to the cell inner membrane. In terms of biological role, conducts the efflux of threonine. This chain is Threonine efflux protein (rhtC), found in Escherichia coli O157:H7.